The following is a 360-amino-acid chain: Probable ribonucleoside-diphosphate reductase small subunit 376L (360 aa).

Fe cation contacts are provided by Asp-67, Glu-98, and His-101. Residue Tyr-105 is part of the active site. The Fe cation site is built by Glu-172, Glu-206, and His-209.

The protein belongs to the ribonucleoside diphosphate reductase small chain family. As to quaternary structure, heterotetramer composed of a homodimer of the large subunit (R1) and a homodimer of the small subunit (R2). Larger multisubunit protein complex are also active, composed of (R1)n(R2)n. Fe cation is required as a cofactor.

The enzyme catalyses a 2'-deoxyribonucleoside 5'-diphosphate + [thioredoxin]-disulfide + H2O = a ribonucleoside 5'-diphosphate + [thioredoxin]-dithiol. Its function is as follows. Ribonucleoside-diphosphate reductase holoenzyme provides the precursors necessary for viral DNA synthesis. Allows virus growth in non-dividing cells. Catalyzes the biosynthesis of deoxyribonucleotides from the corresponding ribonucleotides. In Acheta domesticus (House cricket), this protein is Probable ribonucleoside-diphosphate reductase small subunit 376L.